We begin with the raw amino-acid sequence, 284 residues long: D-tagatose-1,6-bisphosphate aldolase subunit GatY (284 aa).

The Proton donor role is filled by D82. Residues H83 and H180 each contribute to the Zn(2+) site. Position 181 (G181) interacts with dihydroxyacetone phosphate. Position 208 (H208) interacts with Zn(2+). Dihydroxyacetone phosphate contacts are provided by residues 209–211 (GAS) and 230–233 (NVAT).

It belongs to the class II fructose-bisphosphate aldolase family. TagBP aldolase GatY subfamily. In terms of assembly, forms a complex with GatZ. Requires Zn(2+) as cofactor.

It carries out the reaction D-tagatofuranose 1,6-bisphosphate = D-glyceraldehyde 3-phosphate + dihydroxyacetone phosphate. Its pathway is carbohydrate metabolism; D-tagatose 6-phosphate degradation; D-glyceraldehyde 3-phosphate and glycerone phosphate from D-tagatose 6-phosphate: step 2/2. Catalytic subunit of the tagatose-1,6-bisphosphate aldolase GatYZ, which catalyzes the reversible aldol condensation of dihydroxyacetone phosphate (DHAP or glycerone-phosphate) with glyceraldehyde 3-phosphate (G3P) to produce tagatose 1,6-bisphosphate (TBP). Requires GatZ subunit for full activity and stability. Is involved in the catabolism of galactitol. The protein is D-tagatose-1,6-bisphosphate aldolase subunit GatY of Shigella sonnei (strain Ss046).